The following is a 145-amino-acid chain: AP-2 complex subunit sigma (145 aa).

Belongs to the adaptor complexes small subunit family. Adaptor protein complex 2 (AP-2) is a heterotetramer composed of two large adaptins (alpha-type subunit apl3 and beta-type subunit apl1), a medium chain (mu-type subunit apm4) and a small adaptin (sigma-type subunit aps2).

It is found in the cell membrane. Its subcellular location is the membrane. It localises to the coated pit. Functionally, component of the adaptor complexes which link clathrin to receptors in coated vesicles. Clathrin-associated protein complexes are believed to interact with the cytoplasmic tails of membrane proteins, leading to their selection and concentration. This is AP-2 complex subunit sigma (aps2) from Aspergillus fumigatus (strain ATCC MYA-4609 / CBS 101355 / FGSC A1100 / Af293) (Neosartorya fumigata).